The primary structure comprises 192 residues: Probable nicotinate-nucleotide adenylyltransferase (192 aa).

It belongs to the NadD family.

It catalyses the reaction nicotinate beta-D-ribonucleotide + ATP + H(+) = deamido-NAD(+) + diphosphate. The protein operates within cofactor biosynthesis; NAD(+) biosynthesis; deamido-NAD(+) from nicotinate D-ribonucleotide: step 1/1. Functionally, catalyzes the reversible adenylation of nicotinate mononucleotide (NaMN) to nicotinic acid adenine dinucleotide (NaAD). The chain is Probable nicotinate-nucleotide adenylyltransferase from Cytophaga hutchinsonii (strain ATCC 33406 / DSM 1761 / CIP 103989 / NBRC 15051 / NCIMB 9469 / D465).